Reading from the N-terminus, the 269-residue chain is Formamidopyrimidine-DNA glycosylase (269 aa).

The active-site Schiff-base intermediate with DNA is proline 2. The Proton donor role is filled by glutamate 3. The Proton donor; for beta-elimination activity role is filled by lysine 57. Histidine 90, arginine 109, and lysine 150 together coordinate DNA. The FPG-type zinc finger occupies 235 to 269 (QVYGRKGEPCRVCGTPIVATKHAQRATFYCRHCQK). Arginine 259 functions as the Proton donor; for delta-elimination activity in the catalytic mechanism.

Belongs to the FPG family. As to quaternary structure, monomer. Zn(2+) serves as cofactor.

It carries out the reaction Hydrolysis of DNA containing ring-opened 7-methylguanine residues, releasing 2,6-diamino-4-hydroxy-5-(N-methyl)formamidopyrimidine.. The enzyme catalyses 2'-deoxyribonucleotide-(2'-deoxyribose 5'-phosphate)-2'-deoxyribonucleotide-DNA = a 3'-end 2'-deoxyribonucleotide-(2,3-dehydro-2,3-deoxyribose 5'-phosphate)-DNA + a 5'-end 5'-phospho-2'-deoxyribonucleoside-DNA + H(+). Involved in base excision repair of DNA damaged by oxidation or by mutagenic agents. Acts as a DNA glycosylase that recognizes and removes damaged bases. Has a preference for oxidized purines, such as 7,8-dihydro-8-oxoguanine (8-oxoG). Has AP (apurinic/apyrimidinic) lyase activity and introduces nicks in the DNA strand. Cleaves the DNA backbone by beta-delta elimination to generate a single-strand break at the site of the removed base with both 3'- and 5'-phosphates. This is Formamidopyrimidine-DNA glycosylase from Salmonella dublin (strain CT_02021853).